Reading from the N-terminus, the 63-residue chain is Phylloseptin-Az1 (63 aa).

An N-terminal signal peptide occupies residues 1-19 (LKKSLFLVVFLGLATLSIC). Positions 20-41 (EEEKRETEEEEYNQGEDDKSEE) are excised as a propeptide. A Phenylalanine amide modification is found at Phe62.

As to expression, expressed by the skin glands.

The protein resides in the secreted. In terms of biological role, has antimicrobial activity. This is Phylloseptin-Az1 from Pithecopus azureus (Orange-legged monkey tree frog).